Here is a 294-residue protein sequence, read N- to C-terminus: tRNA-cytidine(32) 2-sulfurtransferase (294 aa).

A PP-loop motif motif is present at residues 58–63 (SGGKDS). [4Fe-4S] cluster is bound by residues Cys-133, Cys-136, and Cys-224.

Belongs to the TtcA family. In terms of assembly, homodimer. The cofactor is Mg(2+). It depends on [4Fe-4S] cluster as a cofactor.

It is found in the cytoplasm. It catalyses the reaction cytidine(32) in tRNA + S-sulfanyl-L-cysteinyl-[cysteine desulfurase] + AH2 + ATP = 2-thiocytidine(32) in tRNA + L-cysteinyl-[cysteine desulfurase] + A + AMP + diphosphate + H(+). The protein operates within tRNA modification. Catalyzes the ATP-dependent 2-thiolation of cytidine in position 32 of tRNA, to form 2-thiocytidine (s(2)C32). The sulfur atoms are provided by the cysteine/cysteine desulfurase (IscS) system. The chain is tRNA-cytidine(32) 2-sulfurtransferase from Ruegeria pomeroyi (strain ATCC 700808 / DSM 15171 / DSS-3) (Silicibacter pomeroyi).